A 303-amino-acid polypeptide reads, in one-letter code: Tyrosine-protein phosphatase 3 (303 aa).

Positions Tyr24–Leu292 constitute a Tyrosine-protein phosphatase domain. Cys227 functions as the Phosphocysteine intermediate in the catalytic mechanism.

This sequence belongs to the protein-tyrosine phosphatase family. Non-receptor class subfamily.

It localises to the cytoplasm. The catalysed reaction is O-phospho-L-tyrosyl-[protein] + H2O = L-tyrosyl-[protein] + phosphate. Functionally, contributes to dephosphorylation of tyrosine 15 of cdc2. In Schizosaccharomyces pombe (strain 972 / ATCC 24843) (Fission yeast), this protein is Tyrosine-protein phosphatase 3 (pyp3).